The sequence spans 172 residues: Biogenesis of lysosome-related organelles complex 1 subunit 6 (172 aa).

A compositionally biased stretch (pro residues) spans Met1–Asp10. 2 disordered regions span residues Met1–Gly37 and Gln141–Thr172. Residues Asp63–Lys167 are a coiled coil. The segment covering Arg143–Leu164 has biased composition (basic and acidic residues).

Belongs to the BLOC1S6 family. Octamer composed of one copy each BLOC1S1, BLOC1S2, BLOC1S3, BLOC1S4, BLOC1S5, BLOC1S6, DTNBP1/BLOC1S7 and SNAPIN/BLOC1S8. Interacts with SNAP47. Homodimer. Component of the biogenesis of lysosome-related organelles complex 1 (BLOC-1) composed of BLOC1S1, BLOC1S2, BLOC1S3, BLOC1S4, BLOC1S5, BLOC1S6, DTNBP1/BLOC1S7 and SNAPIN/BLOC1S8. Interacts with BLOC1S4, BLOC1S5, DTNBP1/BLOC1S7, F-actin, SNAP25 isoform 1 and STX12. In terms of processing, phosphorylated. As to expression, expressed in liver, kidney and spleen (at protein level). Ubiquitously expressed, with the highest expression levels observed in brain, heart, liver and kidney.

It localises to the cytoplasm. The protein localises to the membrane. In terms of biological role, component of the BLOC-1 complex, a complex that is required for normal biogenesis of lysosome-related organelles (LRO), such as platelet dense granules and melanosomes. In concert with the AP-3 complex, the BLOC-1 complex is required to target membrane protein cargos into vesicles assembled at cell bodies for delivery into neurites and nerve terminals. The BLOC-1 complex, in association with SNARE proteins, is also proposed to be involved in neurite extension. May play a role in intracellular vesicle trafficking, particularly in the vesicle-docking and fusion process. The protein is Biogenesis of lysosome-related organelles complex 1 subunit 6 (Bloc1s6) of Mus musculus (Mouse).